The primary structure comprises 801 residues: Leucine--tRNA ligase (801 aa).

Residues 40-51 (PYPSGAGLHVGH) carry the 'HIGH' region motif. A 'KMSKS' region motif is present at residues 576–580 (KMSKS). ATP is bound at residue lysine 579.

It belongs to the class-I aminoacyl-tRNA synthetase family.

The protein localises to the cytoplasm. It catalyses the reaction tRNA(Leu) + L-leucine + ATP = L-leucyl-tRNA(Leu) + AMP + diphosphate. The polypeptide is Leucine--tRNA ligase (Exiguobacterium sibiricum (strain DSM 17290 / CCUG 55495 / CIP 109462 / JCM 13490 / 255-15)).